The chain runs to 379 residues: MNYQKILIRYGELVLKKKNRSLFISILKQNIQKILDTKVEDEFDRMFVEYKDEFLDKLKFIPGISSFSPVKVCEKKLENIQQEVLEETQKNTNEFTKTFKIISRRSDKNFELNSLEMNNYFGSLILKNFELKVDVKKPDLNINIEVGRHHAFVFCKIYYSIGGLPVSSSGKSLHLLSGGIDSPVAAIELMKRGIKVEFLAFVTPPHTDEKTVNKLMMLKDVFNKFQHDSKIHLVNYTKIMNYISLISDQSYKIALMRRSFYRIADKIAKRKKIMAISNGENLGQVASQTIESMICISSQTNLLIFRPLLAWNKVDIINLGQKYKTYQISTIPASESCELFAPEKPVIKPTISKAEELEKELEKIFEYEDELVESVLSQK.

The THUMP domain maps to 52–157 (DEFLDKLKFI…RHHAFVFCKI (106 aa)). ATP is bound by residues 175–176 (LL), arginine 257, glycine 279, and glutamine 288.

The protein belongs to the ThiI family.

It is found in the cytoplasm. It carries out the reaction [ThiI sulfur-carrier protein]-S-sulfanyl-L-cysteine + a uridine in tRNA + 2 reduced [2Fe-2S]-[ferredoxin] + ATP + H(+) = [ThiI sulfur-carrier protein]-L-cysteine + a 4-thiouridine in tRNA + 2 oxidized [2Fe-2S]-[ferredoxin] + AMP + diphosphate. The catalysed reaction is [ThiS sulfur-carrier protein]-C-terminal Gly-Gly-AMP + S-sulfanyl-L-cysteinyl-[cysteine desulfurase] + AH2 = [ThiS sulfur-carrier protein]-C-terminal-Gly-aminoethanethioate + L-cysteinyl-[cysteine desulfurase] + A + AMP + 2 H(+). The protein operates within cofactor biosynthesis; thiamine diphosphate biosynthesis. In terms of biological role, catalyzes the ATP-dependent transfer of a sulfur to tRNA to produce 4-thiouridine in position 8 of tRNAs, which functions as a near-UV photosensor. Also catalyzes the transfer of sulfur to the sulfur carrier protein ThiS, forming ThiS-thiocarboxylate. This is a step in the synthesis of thiazole, in the thiamine biosynthesis pathway. The sulfur is donated as persulfide by IscS. This Mycoplasmopsis pulmonis (strain UAB CTIP) (Mycoplasma pulmonis) protein is Probable tRNA sulfurtransferase.